The following is a 235-amino-acid chain: Ubiquinone/menaquinone biosynthesis C-methyltransferase UbiE (235 aa).

Thr60 and Asp81 together coordinate S-adenosyl-L-methionine.

This sequence belongs to the class I-like SAM-binding methyltransferase superfamily. MenG/UbiE family.

It carries out the reaction a 2-demethylmenaquinol + S-adenosyl-L-methionine = a menaquinol + S-adenosyl-L-homocysteine + H(+). It catalyses the reaction a 2-methoxy-6-(all-trans-polyprenyl)benzene-1,4-diol + S-adenosyl-L-methionine = a 5-methoxy-2-methyl-3-(all-trans-polyprenyl)benzene-1,4-diol + S-adenosyl-L-homocysteine + H(+). The protein operates within quinol/quinone metabolism; menaquinone biosynthesis; menaquinol from 1,4-dihydroxy-2-naphthoate: step 2/2. It functions in the pathway cofactor biosynthesis; ubiquinone biosynthesis. Functionally, methyltransferase required for the conversion of demethylmenaquinol (DMKH2) to menaquinol (MKH2) and the conversion of 2-polyprenyl-6-methoxy-1,4-benzoquinol (DDMQH2) to 2-polyprenyl-3-methyl-6-methoxy-1,4-benzoquinol (DMQH2). The polypeptide is Ubiquinone/menaquinone biosynthesis C-methyltransferase UbiE (Geotalea uraniireducens (strain Rf4) (Geobacter uraniireducens)).